Here is a 620-residue protein sequence, read N- to C-terminus: Protein CNGC15b (620 aa).

6 helical membrane-spanning segments follow: residues 73–93, 102–122, 161–181, 198–218, 237–257, and 356–376; these read IFLV…YLPI, IGIA…VFYV, GFFL…WIVI, FIII…SSQI, LMLY…LSIE, and GEIM…ALLI. Residue 462-559 coordinates a nucleoside 3',5'-cyclic phosphate; the sequence is LFDAMDERML…SSTRTVKAIS (98 aa).

Belongs to the cyclic nucleotide-gated cation channel (TC 1.A.1.5) family. Interacts (via N-terminus) with DMI1 (via c-terminus). The Nod factor has no effect on this interaction, implying that the complex is maintained after activation. In terms of tissue distribution, expressed in roots, stems, leaves, flowers and pods.

It localises to the nucleus membrane. In terms of biological role, cyclic nucleotide-gated channel involved in the establishment of both rhizobial and mycorrhizal associations. Required for full activation of nuclear-localized Ca(2+) oscillations by Nod and Myc factors. Simultaneous activation of the K(+)-permeable channel DMI1 and the Ca(2+) channel CNGC15 can give rise to sustained Ca(2+) oscillations. May function during fertilization in both female and male gametophytic Ca(2+) signaling. In Medicago truncatula (Barrel medic), this protein is Protein CNGC15b.